The following is a 341-amino-acid chain: L-threonine 3-dehydrogenase (341 aa).

Residue C38 coordinates Zn(2+). Residues T40 and H43 each act as charge relay system in the active site. Zn(2+) contacts are provided by H63, E64, C93, C96, C99, and C107. NAD(+)-binding positions include I175, D195, R200, 262-264, and 286-287; these read LGI and IY.

This sequence belongs to the zinc-containing alcohol dehydrogenase family. In terms of assembly, homotetramer. Zn(2+) serves as cofactor.

Its subcellular location is the cytoplasm. The catalysed reaction is L-threonine + NAD(+) = (2S)-2-amino-3-oxobutanoate + NADH + H(+). The protein operates within amino-acid degradation; L-threonine degradation via oxydo-reductase pathway; glycine from L-threonine: step 1/2. In terms of biological role, catalyzes the NAD(+)-dependent oxidation of L-threonine to 2-amino-3-ketobutyrate. The protein is L-threonine 3-dehydrogenase of Shewanella oneidensis (strain ATCC 700550 / JCM 31522 / CIP 106686 / LMG 19005 / NCIMB 14063 / MR-1).